Consider the following 444-residue polypeptide: Na(+)/H(+) antiporter NhaA (444 aa).

11 helical membrane-spanning segments follow: residues 27–47 (TTGLMLMLMTVVALLLANSPL), 72–92 (IHHWINDGLMAIFFFIIGLEI), 108–128 (MLPILAAIGGMALPALIYYAI), 136–156 (AGWGIPMATDIAFAISALVLL), 167–187 (FLVALAIVDDLGAVVVIALFY), 190–210 (EINMLPLLFAFISFLVLVSFN), 212–232 (FGIHAILPYFVVGFIMWLFML), 312–332 (HLPVSLVVIPLFALANAGVSI), 349–369 (VMAGLVFGKVFGIAGISYLAI), 385–405 (VFGVAFLGGIGFTMSIFIAEL), and 419–439 (IGILAASLFAGIFGFIWLRFI).

This sequence belongs to the NhaA Na(+)/H(+) (TC 2.A.33) antiporter family.

The protein localises to the cell inner membrane. It catalyses the reaction Na(+)(in) + 2 H(+)(out) = Na(+)(out) + 2 H(+)(in). In terms of biological role, na(+)/H(+) antiporter that extrudes sodium in exchange for external protons. This is Na(+)/H(+) antiporter NhaA from Sulfurimonas denitrificans (strain ATCC 33889 / DSM 1251) (Thiomicrospira denitrificans (strain ATCC 33889 / DSM 1251)).